A 396-amino-acid polypeptide reads, in one-letter code: Flavohemoprotein (396 aa).

Residues Met-1–Ala-136 form the Globin domain. Heme b is bound at residue His-85. Catalysis depends on charge relay system residues Tyr-95 and Glu-135. The tract at residues Gly-147 to Leu-396 is reductase. One can recognise an FAD-binding FR-type domain in the interval Glu-150–Asn-255. FAD contacts are provided by residues Tyr-188 and Arg-204–Ser-207. Gly-268–Pro-273 provides a ligand contact to NADP(+). Cys-389 to Pro-392 lines the FAD pocket.

Belongs to the globin family. Two-domain flavohemoproteins subfamily. It in the C-terminal section; belongs to the flavoprotein pyridine nucleotide cytochrome reductase family. As to quaternary structure, monomer. The cofactor is heme b. Requires FAD as cofactor.

The catalysed reaction is 2 nitric oxide + NADPH + 2 O2 = 2 nitrate + NADP(+) + H(+). It carries out the reaction 2 nitric oxide + NADH + 2 O2 = 2 nitrate + NAD(+) + H(+). Functionally, is involved in NO detoxification in an aerobic process, termed nitric oxide dioxygenase (NOD) reaction that utilizes O(2) and NAD(P)H to convert NO to nitrate, which protects the bacterium from various noxious nitrogen compounds. Therefore, plays a central role in the inducible response to nitrosative stress. This is Flavohemoprotein (hmp) from Salmonella typhimurium (strain LT2 / SGSC1412 / ATCC 700720).